Here is a 759-residue protein sequence, read N- to C-terminus: ARF GTPase-activating protein GIT2 (759 aa).

The Arf-GAP domain maps to 1–124 (MSKRLRSNDV…AFVHRLPCRD (124 aa)). The C4-type zinc finger occupies 11–34 (CADCSGPDPSWASVNRGTLICDEC). ANK repeat units follow at residues 132–161 (DLSK…QANF), 166–198 (KGST…THDS), and 199–228 (SGKT…ELTD). Disordered regions lie at residues 376–422 (VSNQ…DLSD) and 469–641 (QSEN…PSTE). Positions 385–402 (QDNDQPDYDSVASDEDTD) are enriched in acidic residues. Positions 451–478 (NNNLSGELRIMQKKLQTLQSENSSLRRQ) form a coiled coil. Residues 469 to 489 (QSENSSLRRQATASACQVQTA) are compositionally biased toward polar residues. Positions 555 to 569 (TSSSSLPSFPSTLSW) are enriched in low complexity. Residues 570 to 583 (SRDESTRRASRLEK) show a composition bias toward basic and acidic residues.

In terms of assembly, may form heterooligomers with GIT1. Directly interacts with protein Piccolo/PCLO. Interacts with PPFIA1 and PPFIA2. Interacts with ARHGEF7. Identified in a complex with ARHGEF6 and BIN2. Interacts with PAK3. Interacts with PXN/paxillin. Interacts with TGFB1I1. Forms a complex with EFNB1 and GRB4/NCK2.

In terms of biological role, GTPase-activating protein for ADP ribosylation factor family members, including ARF1. In Rattus norvegicus (Rat), this protein is ARF GTPase-activating protein GIT2 (Git2).